Consider the following 37-residue polypeptide: Cytochrome b6-f complex subunit 5 (37 aa).

The chain crosses the membrane as a helical span at residues leucine 5–alanine 25.

This sequence belongs to the PetG family. In terms of assembly, the 4 large subunits of the cytochrome b6-f complex are cytochrome b6, subunit IV (17 kDa polypeptide, PetD), cytochrome f and the Rieske protein, while the 4 small subunits are PetG, PetL, PetM and PetN. The complex functions as a dimer.

It is found in the cellular thylakoid membrane. Its function is as follows. Component of the cytochrome b6-f complex, which mediates electron transfer between photosystem II (PSII) and photosystem I (PSI), cyclic electron flow around PSI, and state transitions. PetG is required for either the stability or assembly of the cytochrome b6-f complex. The chain is Cytochrome b6-f complex subunit 5 from Cyanothece sp. (strain PCC 7425 / ATCC 29141).